The sequence spans 399 residues: Argininosuccinate synthase (399 aa).

Residues 10–18 (AYSGGVDTS) and Ala-38 contribute to the ATP site. Tyr-89 contributes to the L-citrulline binding site. Gly-119 is a binding site for ATP. L-aspartate-binding residues include Thr-121, Asn-125, and Asp-126. Asn-125 contacts L-citrulline. L-citrulline-binding residues include Arg-129, Ser-177, Ser-186, Glu-262, and Tyr-274.

It belongs to the argininosuccinate synthase family. Type 1 subfamily. As to quaternary structure, homotetramer.

It is found in the cytoplasm. The catalysed reaction is L-citrulline + L-aspartate + ATP = 2-(N(omega)-L-arginino)succinate + AMP + diphosphate + H(+). Its pathway is amino-acid biosynthesis; L-arginine biosynthesis; L-arginine from L-ornithine and carbamoyl phosphate: step 2/3. This Acaryochloris marina (strain MBIC 11017) protein is Argininosuccinate synthase.